A 95-amino-acid chain; its full sequence is Large ribosomal subunit protein uL23cz/uL23cy (95 aa).

Belongs to the universal ribosomal protein uL23 family. Part of the 50S ribosomal subunit.

It is found in the plastid. Its subcellular location is the chloroplast. Binds to 23S rRNA. The protein is Large ribosomal subunit protein uL23cz/uL23cy (rpl23-A) of Amborella trichopoda.